Consider the following 1121-residue polypeptide: uncharacterized protein (1121 aa).

Positions 179 to 198 are disordered; that stretch reads GPGECQSVHNQSSGSGSNSY. Residues N188, N325, N351, N449, N561, and N615 are each glycosylated (N-linked (GlcNAc...) asparagine; by host). Disordered regions lie at residues 649–684 and 701–734; these read KRIHSQNENPEDGQVREGGCSDVRNEPPRKSARIHN and STRQDASGGSSSGTKNEYYDDESELTGLSDTDSD. Residues 701-715 are compositionally biased toward polar residues; that stretch reads STRQDASGGSSSGTK. N838, N911, N914, and N980 each carry an N-linked (GlcNAc...) asparagine; by host glycan.

Belongs to the herpesviridae US22 family.

This is an uncharacterized protein from Homo sapiens (Human).